The primary structure comprises 740 residues: Ribosomal protein S6 kinase alpha-3 (740 aa).

The interval 1–26 is disordered; the sequence is MPLAQLADPWQKMAVESPSDSAENGQ. One can recognise a Protein kinase 1 domain in the interval 68 to 327; sequence FELLKVLGQG…VEEIKRHSFF (260 aa). ATP is bound by residues 74-82 and K100; that span reads LGQGSFGKV. D193 (proton acceptor) is an active-site residue. S227 carries the post-translational modification Phosphoserine; by PDPK1. Residues 328 to 397 enclose the AGC-kinase C-terminal domain; the sequence is STIDWNKLYR…VAITSDDESQ (70 aa). T365 carries the post-translational modification Phosphothreonine. Phosphoserine occurs at positions 369 and 375. S386 carries the phosphoserine; by autocatalysis and MAPKAPK2 modification. S415 carries the phosphoserine modification. A Protein kinase 2 domain is found at 422-679; it reads YEVKEDIGVG…AALVLRHPWI (258 aa). Residues 428–436 and K451 contribute to the ATP site; that span reads IGVGSYSVC. Y529 bears the Phosphotyrosine; by FGFR3 mark. D539 functions as the Proton acceptor in the catalytic mechanism. 2 positions are modified to phosphoserine: S556 and S715.

The protein belongs to the protein kinase superfamily. AGC Ser/Thr protein kinase family. S6 kinase subfamily. As to quaternary structure, forms a complex with either MAPK1/ERK2 or MAPK3/ERK1 in quiescent cells. Transiently dissociates following mitogenic stimulation. Interacts with NFATC4, ETV1/ER81 and FGFR1. It depends on Mg(2+) as a cofactor. In terms of processing, activated by phosphorylation at Ser-227 by PDPK1. Autophosphorylated on Ser-386, as part of the activation process. May be phosphorylated at Thr-365 and Ser-369 by MAPK1/ERK2 and MAPK3/ERK1. Can also be activated via phosphorylation at Ser-386 by MAPKAPK2. Post-translationally, N-terminal myristoylation results in an activated kinase in the absence of added growth factors. Intestine, thymus, lung, heart and brain.

The protein resides in the nucleus. It is found in the cytoplasm. The enzyme catalyses L-seryl-[protein] + ATP = O-phospho-L-seryl-[protein] + ADP + H(+). It carries out the reaction L-threonyl-[protein] + ATP = O-phospho-L-threonyl-[protein] + ADP + H(+). Its activity is regulated as follows. Upon extracellular signal or mitogen stimulation, phosphorylated at Thr-577 in the C-terminal kinase domain (CTKD) by MAPK1/ERK2 and MAPK3/ERK1. The activated CTKD then autophosphorylates Ser-386, allowing binding of PDPK1, which in turn phosphorylates Ser-227 in the N-terminal kinase domain (NTDK) leading to the full activation of the protein and subsequent phosphorylation of the substrates by the NTKD. In terms of biological role, serine/threonine-protein kinase that acts downstream of ERK (MAPK1/ERK2 and MAPK3/ERK1) signaling and mediates mitogenic and stress-induced activation of the transcription factors CREB1, ETV1/ER81 and NR4A1/NUR77, regulates translation through RPS6 and EIF4B phosphorylation, and mediates cellular proliferation, survival, and differentiation by modulating mTOR signaling and repressing pro-apoptotic function of BAD and DAPK1. In fibroblast, is required for EGF-stimulated phosphorylation of CREB1 and histone H3 at 'Ser-10', which results in the subsequent transcriptional activation of several immediate-early genes. In response to mitogenic stimulation (EGF and PMA), phosphorylates and activates NR4A1/NUR77 and ETV1/ER81 transcription factors and the cofactor CREBBP. Upon insulin-derived signal, acts indirectly on the transcription regulation of several genes by phosphorylating GSK3B at 'Ser-9' and inhibiting its activity. Phosphorylates RPS6 in response to serum or EGF via an mTOR-independent mechanism and promotes translation initiation by facilitating assembly of the preinitiation complex. In response to insulin, phosphorylates EIF4B, enhancing EIF4B affinity for the EIF3 complex and stimulating cap-dependent translation. Is involved in the mTOR nutrient-sensing pathway by directly phosphorylating TSC2 at 'Ser-1798', which potently inhibits TSC2 ability to suppress mTOR signaling, and mediates phosphorylation of RPTOR, which regulates mTORC1 activity and may promote rapamycin-sensitive signaling independently of the PI3K/AKT pathway. Mediates cell survival by phosphorylating the pro-apoptotic proteins BAD and DAPK1 and suppressing their pro-apoptotic function. Promotes the survival of hepatic stellate cells by phosphorylating CEBPB in response to the hepatotoxin carbon tetrachloride (CCl4). Is involved in cell cycle regulation by phosphorylating the CDK inhibitor CDKN1B, which promotes CDKN1B association with 14-3-3 proteins and prevents its translocation to the nucleus and inhibition of G1 progression. In LPS-stimulated dendritic cells, is involved in TLR4-induced macropinocytosis, and in myeloma cells, acts as effector of FGFR3-mediated transformation signaling, after direct phosphorylation at Tyr-529 by FGFR3. Negatively regulates EGF-induced MAPK1/3 phosphorylation via phosphorylation of SOS1. Phosphorylates SOS1 at 'Ser-1134' and 'Ser-1161' that create YWHAB and YWHAE binding sites and which contribute to the negative regulation of MAPK1/3 phosphorylation. Phosphorylates EPHA2 at 'Ser-897', the RPS6KA-EPHA2 signaling pathway controls cell migration. Acts as a regulator of osteoblast differentiation by mediating phosphorylation of ATF4, thereby promoting ATF4 transactivation activity. This Mus musculus (Mouse) protein is Ribosomal protein S6 kinase alpha-3 (Rps6ka3).